The primary structure comprises 2462 residues: Piezo-type mechanosensitive ion channel homolog (2462 aa).

The next 19 membrane-spanning stretches (helical) occupy residues 5–25 (LVGF…WSVI), 27–47 (FLDL…GYRF), 57–77 (IFIF…IWAA), 105–125 (TVMY…ADIY), 163–183 (AVQL…FFIG), 207–227 (LYIY…PINF), 248–268 (EGPD…LSYV), 325–345 (FFTY…FHFA), 347–367 (LCAF…PSLF), 374–394 (GLLL…NVAF), 404–424 (FGLG…FLYL), 467–487 (LIFL…IFFL), 502–522 (SLIL…IDLV), 554–574 (IALL…LFSF), 653–673 (VYLV…LLWI), 694–714 (AVLV…QLWL), 730–750 (APLL…QLYS), 792–812 (FYAS…GLVI), and 826–846 (SFLI…LWGM). A disordered region spans residues 927–947 (ASVSSSNGENPSSTDHASISM). The span at 928–939 (SVSSSNGENPSS) shows a compositional bias: low complexity. The next 8 helical transmembrane spans lie at 1027-1047 (FWIE…ALLL), 1050-1070 (FALL…CVLL), 1078-1098 (LWPV…VATW), 1143-1160 (TLIS…KLRA), 1204-1224 (LYCY…TGTL), 1228-1248 (ILHL…LEIL), 1260-1280 (VYNF…VGNF), and 1310-1330 (SALV…MFSS). A coiled-coil region spans residues 1347–1400 (AIVREQEKKAARKTEQLQQIREAEEKKRQRNLQVEKMKSEMLNLRVQLHRMNSD). Residues 1543–1583 (SDTNEQSSVDDEVYDEMESQKRKHTPFERSTSLQSDRSSDG) form a disordered region. The segment covering 1550–1559 (SVDDEVYDEM) has biased composition (acidic residues). The segment covering 1570–1583 (ERSTSLQSDRSSDG) has biased composition (polar residues). 8 helical membrane-spanning segments follow: residues 1611 to 1631 (FIIA…AALF), 1647 to 1667 (VIML…QIII), 1916 to 1936 (YIFG…QSVI), 1956 to 1976 (FVII…IYLC), 1984 to 2004 (VYYL…AWSI), 2012 to 2032 (AGLA…LQAI), 2130 to 2150 (GICL…MYSS), and 2369 to 2389 (FLGD…FVLA).

This sequence belongs to the PIEZO (TC 1.A.75) family.

The protein localises to the membrane. Functionally, pore-forming subunit of a mechanosensitive non-specific cation channel, that conducts both sodium and potassium ions. In Arabidopsis thaliana (Mouse-ear cress), this protein is Piezo-type mechanosensitive ion channel homolog.